The sequence spans 488 residues: Neisserial heparin binding antigen (488 aa).

The first 17 residues, 1–17, serve as a signal peptide directing secretion; sequence MFKRSVIAMACIFALSA. A lipid anchor (N-palmitoyl cysteine) is attached at cysteine 18. Cysteine 18 carries S-diacylglycerol cysteine lipidation. Positions 21–201 are disordered; that stretch reads GGGGSPDVKS…NPAPANGGSN (181 aa). Residues 43–53 show a composition bias toward basic and acidic residues; the sequence is SEKETEAKEDA. Over residues 54–70 the composition is skewed to low complexity; the sequence is PQAGSQGQGAPSAQGSQ. Composition is skewed to polar residues over residues 101-118 and 127-142; these read DMPQNAAGTDSSTPNHTP and MENQATDAGESSQPAN. Low complexity predominate over residues 160–183; the sequence is AGGQNAGNTAAQGANQAGNNQAAG. The Arg-rich motif signature appears at 296–306; that stretch reads RFRRSARSRRS. Residues 306–488 are C1 fragment; that stretch reads SLPAEMPLIP…GVFAGKKEQD (183 aa).

This sequence belongs to the NHBA family. In terms of assembly, the C-terminal beta-barrel forms a monomer. Cleaved in vivo by the Neisserial phase-variable autotransporter/serine protease NalP to give 2 fragments. The N-terminus remains in the cell outer membrane while the 22 kDa C-terminus (beginning on Ser-293) is soluble; this soluble fragment is called C2. Cleaved in vitro by human lactoferrin (LTF, between Arg-305 and Ser-306), this fragment is called C1. Cleavage by NalP or lactoferrin does not alter killing of Neisseria by bactericidal antibodies in vitro. Recombinant and cell surface protein is cleaved by human saliva kallikrein (KLK1) between Ser-303 and Arg-304; in saliva kallikrein is more active on NHBA than lactoferrin. Human plasma kallikrein (KLKB1) cleaves in a similar manner to KLK1.

Its subcellular location is the cell outer membrane. It localises to the cell surface. The protein localises to the host mitochondrion. Functionally, a major human immunogenic protein detected in patients recovering from meningitidis, where it induces bactericidal antibodies. Binds heparin and heparan sulfate proteoglycan in vitro via the Arg-rich motif. Heparin-binding to this protein protects bacteria against killing by bactericidal antibodies (serum killing). Binds to human cells via the Arg-rich region; binding may require the intact protein as protein fragments do not bind to human cells. Protein binding to human cells is abolished by treatment with heparinase III but not chondroitinase ABC. The bacteria binds a number of human extracellular sialyated and/or sulfated glycans via this protein, including chondroitin sulfate (KD=5.2 nM), heparin (KD=52 nM) and ganglioside GT3 (KD=210 nM). The recombinant protein binds DNA non-specifically. Plays a role in extracellular-DNA (eDNA) mediated biofilm formation. In strain MC58 eDNA stimulates biofilm formation. When NHBA is not processed by NalP there is an increase in positively charged, NHBA- and IgA-derived DNA-binding peptides on the cell surface, resulting in increased DNA-binding peptides and increased biofilm formation. In terms of biological role, [C2 fragment] Localizes to host mitochondria when applied to the apical side of human endothelial cell layers, where it induces production of reactive oxygen species which lead to increased permeability of host endothelial cells. The C1 fragment (which lacks the first 14 residues of C2) does not have this effect. It is not known if this occurs during Neisseria infections. This Neisseria meningitidis serogroup B (strain ATCC BAA-335 / MC58) protein is Neisserial heparin binding antigen.